The primary structure comprises 618 residues: Transcriptional regulator CPUR_05421 (618 aa).

The segment at residues Cys14–Cys41 is a DNA-binding region (zn(2)-C6 fungal-type). The segment at Thr52 to Glu87 is disordered. Positions Asn59 to Ala81 are enriched in polar residues.

The protein resides in the nucleus. Functionally, transcriptional regulator; part of the ergochrome gene cluster responsible for the typical purple-black color of the ergot sclerotia. The ergochrome gene cluster produces several ergot pigments including the yellow ergochrome secalonic acid and its derivatives, as well as the red anthraquinones endocrocin and clavorubin. This chain is Transcriptional regulator CPUR_05421, found in Claviceps purpurea (strain 20.1) (Ergot fungus).